The chain runs to 136 residues: Large ribosomal subunit protein uL16 (136 aa).

This sequence belongs to the universal ribosomal protein uL16 family. As to quaternary structure, part of the 50S ribosomal subunit.

Binds 23S rRNA and is also seen to make contacts with the A and possibly P site tRNAs. This chain is Large ribosomal subunit protein uL16, found in Shigella flexneri.